A 194-amino-acid polypeptide reads, in one-letter code: MRLVLLGPPGAGKGTQALRLVQRHGIVQLSTGDMLRAAVAAGTPVGLKAKAVMESGGLVSDEIVIGIIAERLDQPDARKGFILDGFPRTVAQADALDKLLADKGLKLDAVIELKVDQAKLLDRILNRAAEAKAKGEPVRKDDDPEVFKTRLEAYNRDTAVVAPYYSARGQLQQIDGMAPIEKVTQAIDSILETA.

ATP is bound at residue 10-15; it reads GAGKGT. The tract at residues 30-59 is NMP; the sequence is STGDMLRAAVAAGTPVGLKAKAVMESGGLV. Residues Thr31, Arg36, 57–59, 85–88, and Gln92 contribute to the AMP site; these read GLV and GFPR. Residues 126 to 142 form an LID region; that stretch reads NRAAEAKAKGEPVRKDD. Residue Arg127 coordinates ATP. Arg139 and Arg150 together coordinate AMP. Ala178 is an ATP binding site.

This sequence belongs to the adenylate kinase family. Monomer.

The protein localises to the cytoplasm. The enzyme catalyses AMP + ATP = 2 ADP. It participates in purine metabolism; AMP biosynthesis via salvage pathway; AMP from ADP: step 1/1. In terms of biological role, catalyzes the reversible transfer of the terminal phosphate group between ATP and AMP. Plays an important role in cellular energy homeostasis and in adenine nucleotide metabolism. In Azorhizobium caulinodans (strain ATCC 43989 / DSM 5975 / JCM 20966 / LMG 6465 / NBRC 14845 / NCIMB 13405 / ORS 571), this protein is Adenylate kinase.